A 256-amino-acid polypeptide reads, in one-letter code: MTDVSRVLKEARDQGRLTTLDYANLIFDDFMELHGDRHFSDDGAIVGGLAYLAGQPVTVIGIQKGKNLQDNLARNFGQPNPEGYRKALRLMKQAEKFGRPVVTFINTAGAYPGVGAEERGQGEAIAKNLMEMSDLKVPIIAIIIGEGGSGGALALAVADQVWMLENTMYAVLSPEGFASILWKDGSRATEAAELMKITAGELYQMGIVDRIIPEHGYFSSEIVDIIKANLIEQITSLQAKPLDQLLDERYQRFRKY.

The 236-residue stretch at 1-236 (MTDVSRVLKE…KANLIEQITS (236 aa)) folds into the CoA carboxyltransferase C-terminal domain.

Belongs to the AccA family. Acetyl-CoA carboxylase is a heterohexamer composed of biotin carboxyl carrier protein (AccB), biotin carboxylase (AccC) and two subunits each of ACCase subunit alpha (AccA) and ACCase subunit beta (AccD).

The protein resides in the cytoplasm. The enzyme catalyses N(6)-carboxybiotinyl-L-lysyl-[protein] + acetyl-CoA = N(6)-biotinyl-L-lysyl-[protein] + malonyl-CoA. It participates in lipid metabolism; malonyl-CoA biosynthesis; malonyl-CoA from acetyl-CoA: step 1/1. Its function is as follows. Component of the acetyl coenzyme A carboxylase (ACC) complex. First, biotin carboxylase catalyzes the carboxylation of biotin on its carrier protein (BCCP) and then the CO(2) group is transferred by the carboxyltransferase to acetyl-CoA to form malonyl-CoA. This is Acetyl-coenzyme A carboxylase carboxyl transferase subunit alpha from Streptococcus pyogenes serotype M2 (strain MGAS10270).